A 409-amino-acid chain; its full sequence is Phosphatidylglycerol--prolipoprotein diacylglyceryl transferase (409 aa).

4 consecutive transmembrane segments (helical) span residues 18 to 38, 48 to 68, 93 to 113, and 119 to 139; these read PVPLRAYALMIIIGVFVAVFV, MDPMVASEVAYWAVPFGIVGA, IWNGGLGIWGAIAGGAFGAWL, and GISLALFGDAAAPGIILAQAI. Arginine 141 provides a ligand contact to a 1,2-diacyl-sn-glycero-3-phospho-(1'-sn-glycerol). A run of 2 helical transmembrane segments spans residues 177 to 197 and 234 to 254; these read QPTFLYECLWNLVVAGILLVV and ILGLRVNIWTSIVVCLGALLA. Residues 273–409 are disordered; that stretch reads ALGIARSRPA…AVPPEEPQLP (137 aa). 3 stretches are compositionally biased toward low complexity: residues 297–309, 320–335, and 348–375; these read AAAPDSAGPDSAA, PDLGGPDPADPGSAGS, and TATTATTATTATTATTATTATTATTATT.

This sequence belongs to the Lgt family.

It is found in the cell membrane. It catalyses the reaction L-cysteinyl-[prolipoprotein] + a 1,2-diacyl-sn-glycero-3-phospho-(1'-sn-glycerol) = an S-1,2-diacyl-sn-glyceryl-L-cysteinyl-[prolipoprotein] + sn-glycerol 1-phosphate + H(+). It functions in the pathway protein modification; lipoprotein biosynthesis (diacylglyceryl transfer). Functionally, catalyzes the transfer of the diacylglyceryl group from phosphatidylglycerol to the sulfhydryl group of the N-terminal cysteine of a prolipoprotein, the first step in the formation of mature lipoproteins. The protein is Phosphatidylglycerol--prolipoprotein diacylglyceryl transferase of Frankia casuarinae (strain DSM 45818 / CECT 9043 / HFP020203 / CcI3).